The primary structure comprises 302 residues: Recombination-associated protein RdgC (302 aa).

It belongs to the RdgC family.

Its subcellular location is the cytoplasm. The protein localises to the nucleoid. In terms of biological role, may be involved in recombination. The chain is Recombination-associated protein RdgC from Xylella fastidiosa (strain M12).